We begin with the raw amino-acid sequence, 881 residues long: MSNTEKNLPTKYDHMSVEEGLYQWWLEGKYFEATGDEKKQPYTIVIPPPNVTGKLHLGHAWDTTLQDILTRTKRMQGYDVLWLPGMDHAGIATQAKVEGKLREEGISRYDLGREKFLEKAWEWKEEYASHIRQQWGKVGLGLDYSRERFTLDEGLSDAVNKVFVQLYEKGLIYRGEYIINWDPATRTALSDIEVIHKEVQGAFYHMNYPLTDGSGHIRLATTRPETMLGDTAVAVHPEDDRYKHLIGKTVTLPIVGREIPIIADEYVEKDFGTGVVKITPAHDPNDFEVGNRHDLPRILVMNEDGTMNEKAGKYNGMDRFECRKALVKDLQEAGVLVEIEPHMHSVGHSERSGAVVEPYLSTQWFVKMAPLAEKAVALQQKEEEKVTFVPERFENTYLRWMENIHDWCISRQLWWGHRIPAWYHKETGEVYVGTEAPADIENWNQDNDVLDTWFSSALWPFSTLGWPNEDAADFKRYYSTDALVTGYDIIFFWVSRMIFQGLEFTGERPFKDVLIHGLVRDEQGRKMSKSLGNGIDPMEVIEKYGADAMRFFLSTGSAPGQDLRFSMEKVESTWNFINKIWNASRFVLMNMDDMKYEEIDLTGEKSVADKWILTRLNETIESVTRNMDKYEFGEAGRSLYNFIWDDFCDWYIEMAKLPLYGEDEAAKKTTRSILAYVLDQTMRLLHPFMPFVTEKIWQHLPHEGESITVAAWPTVREDLQDAEAAAEMHLLVDIIRSVRNIRAEVNTPMSKKVQMQIKAKDEAVLAQLTKNSSYIERFCNPSELTIQTDLQAPEKAMTAIVTGAELFLPLADLINLDEERARLEKELEKFDKEVERVQKKLSNQGFVAKAPAAVIEGERAKEQDYLEKREAVRQRLADLEK.

A 'HIGH' region motif is present at residues 49 to 59 (PNVTGKLHLGH). A 'KMSKS' region motif is present at residues 526 to 530 (KMSKS). K529 serves as a coordination point for ATP. Residues 810 to 881 (LADLINLDEE…VRQRLADLEK (72 aa)) adopt a coiled-coil conformation.

It belongs to the class-I aminoacyl-tRNA synthetase family. ValS type 1 subfamily. As to quaternary structure, monomer.

Its subcellular location is the cytoplasm. It carries out the reaction tRNA(Val) + L-valine + ATP = L-valyl-tRNA(Val) + AMP + diphosphate. Catalyzes the attachment of valine to tRNA(Val). As ValRS can inadvertently accommodate and process structurally similar amino acids such as threonine, to avoid such errors, it has a 'posttransfer' editing activity that hydrolyzes mischarged Thr-tRNA(Val) in a tRNA-dependent manner. The sequence is that of Valine--tRNA ligase from Bacillus cereus (strain ATCC 10987 / NRS 248).